The primary structure comprises 219 residues: Large ribosomal subunit protein uL3 (219 aa).

Disordered stretches follow at residues Asp-62 to Gly-81 and Gln-136 to Met-156.

The protein belongs to the universal ribosomal protein uL3 family. In terms of assembly, part of the 50S ribosomal subunit. Forms a cluster with proteins L14 and L19.

Its function is as follows. One of the primary rRNA binding proteins, it binds directly near the 3'-end of the 23S rRNA, where it nucleates assembly of the 50S subunit. The protein is Large ribosomal subunit protein uL3 of Staphylococcus saprophyticus subsp. saprophyticus (strain ATCC 15305 / DSM 20229 / NCIMB 8711 / NCTC 7292 / S-41).